We begin with the raw amino-acid sequence, 275 residues long: MRAYRVAYDGQPYHGFQRQPDVDTVEGRLRSALVRLGVCERGEGLPDRYAAAGRTDAGVSARTQTVAFDAPAWLSPAAFNGELPNDVRVWASADVPEDFHATHDAAERTYTYYLYAPADADRPEHEPVDDGRWADAVDALAGTHDFHNLTTDETGTERTVAIDWTRDGQFLVVQLTAGGFCRQLVRRLVSLAAAVADGSAPLSKVDRILSPEPVSGPDGVPPAPPEPLVLTDVRYPNVSFTRDEDAAVDARTVFARRRATARTTARVADHITDGL.

Catalysis depends on Asp-56, which acts as the Nucleophile. Tyr-110 lines the substrate pocket.

This sequence belongs to the tRNA pseudouridine synthase TruA family.

It carries out the reaction uridine(38/39/40) in tRNA = pseudouridine(38/39/40) in tRNA. Functionally, formation of pseudouridine at positions 38, 39 and 40 in the anticodon stem and loop of transfer RNAs. This chain is tRNA pseudouridine synthase A, found in Haloarcula marismortui (strain ATCC 43049 / DSM 3752 / JCM 8966 / VKM B-1809) (Halobacterium marismortui).